We begin with the raw amino-acid sequence, 174 residues long: NADH-ubiquinone oxidoreductase chain 6 (174 aa).

Transmembrane regions (helical) follow at residues 1-21 (MTYALFLLSVSLVMGFVGFSS), 24-44 (SPIYGGLVLIVSGVVGCAIIL), 47-67 (GGGYMGLMVFLIYLGGMMVVF), 86-106 (VEVLVSVLVGLAMEVGLVLWV), 111-131 (GMVVVVNFNSVGSWMIYEGEG), and 151-171 (WLVVVTGWTLFVGVYIVIEIA).

Belongs to the complex I subunit 6 family. Core subunit of respiratory chain NADH dehydrogenase (Complex I) which is composed of 45 different subunits.

It is found in the mitochondrion inner membrane. It carries out the reaction a ubiquinone + NADH + 5 H(+)(in) = a ubiquinol + NAD(+) + 4 H(+)(out). In terms of biological role, core subunit of the mitochondrial membrane respiratory chain NADH dehydrogenase (Complex I) which catalyzes electron transfer from NADH through the respiratory chain, using ubiquinone as an electron acceptor. Essential for the catalytic activity and assembly of complex I. This is NADH-ubiquinone oxidoreductase chain 6 (MT-ND6) from Pan troglodytes (Chimpanzee).